A 199-amino-acid polypeptide reads, in one-letter code: Recombination protein RecR (199 aa).

The C4-type zinc finger occupies 58–73 (CKKCFNLTSEDECEIC). Residues 81 to 175 (KLICVVAETK…KVTRIAYGLP (95 aa)) form the Toprim domain.

It belongs to the RecR family.

Its function is as follows. May play a role in DNA repair. It seems to be involved in an RecBC-independent recombinational process of DNA repair. It may act with RecF and RecO. This Prochlorococcus marinus (strain MIT 9301) protein is Recombination protein RecR.